Reading from the N-terminus, the 1128-residue chain is Zinc finger protein 654 (1128 aa).

Positions 498 to 523 are disordered; the sequence is GFDSLTDQSTGETDPDDVSGVQPKGH. 5 C2H2-type zinc fingers span residues 572–594, 746–771, 787–809, 815–839, and 844–868; these read FACV…LKNH, FKCP…MTVH, GKCK…LNRH, YFCL…TKSH, and AQCS…EAQH. The interval 891-951 is disordered; it reads DSNPNQEKDS…GNERSDDTVS (61 aa). Polar residues-rich tracts occupy residues 903-915 and 937-951; these read NEKQ…VSTS and SLVQ…DTVS. Residues Ser1123 and Ser1127 each carry the phosphoserine modification.

The protein belongs to the krueppel C2H2-type zinc-finger protein family.

It is found in the nucleus. Functionally, may be involved in transcriptional regulation. The sequence is that of Zinc finger protein 654 from Homo sapiens (Human).